The sequence spans 892 residues: Putative ubiquitin carboxyl-terminal hydrolase 11 (892 aa).

Positions 17-132 (YTPEEERRIV…GGPPVPRKLI (116 aa)) constitute a DUSP domain. The tract at residues 69 to 89 (EPSEVTRPGPIDNHDIIDSES) is disordered. The region spanning 301–880 (GGLQNLGNTC…AAYVLFYQRV (580 aa)) is the USP domain. Residue C310 is the Nucleophile of the active site. The interval 636 to 660 (NSGNENGHVPDESSRSILSRDTETE) is disordered. Residues 643 to 657 (HVPDESSRSILSRDT) show a composition bias toward basic and acidic residues. H838 serves as the catalytic Proton acceptor.

It belongs to the peptidase C19 family.

The enzyme catalyses Thiol-dependent hydrolysis of ester, thioester, amide, peptide and isopeptide bonds formed by the C-terminal Gly of ubiquitin (a 76-residue protein attached to proteins as an intracellular targeting signal).. Recognizes and hydrolyzes the peptide bond at the C-terminal Gly of ubiquitin. Involved in the processing of poly-ubiquitin precursors as well as that of ubiquitinated proteins. This Arabidopsis thaliana (Mouse-ear cress) protein is Putative ubiquitin carboxyl-terminal hydrolase 11 (UBP11).